Here is a 144-residue protein sequence, read N- to C-terminus: Large ribosomal subunit protein uL11 (144 aa).

It belongs to the universal ribosomal protein uL11 family. As to quaternary structure, part of the ribosomal stalk of the 50S ribosomal subunit. Interacts with L10 and the large rRNA to form the base of the stalk. L10 forms an elongated spine to which L12 dimers bind in a sequential fashion forming a multimeric L10(L12)X complex. In terms of processing, one or more lysine residues are methylated.

In terms of biological role, forms part of the ribosomal stalk which helps the ribosome interact with GTP-bound translation factors. The chain is Large ribosomal subunit protein uL11 from Legionella pneumophila (strain Paris).